We begin with the raw amino-acid sequence, 443 residues long: Glucose-6-phosphate isomerase (443 aa).

Glu285 serves as the catalytic Proton donor. Residues His306 and Lys420 contribute to the active site.

This sequence belongs to the GPI family.

The protein localises to the cytoplasm. It carries out the reaction alpha-D-glucose 6-phosphate = beta-D-fructose 6-phosphate. Its pathway is carbohydrate biosynthesis; gluconeogenesis. It participates in carbohydrate degradation; glycolysis; D-glyceraldehyde 3-phosphate and glycerone phosphate from D-glucose: step 2/4. In terms of biological role, catalyzes the reversible isomerization of glucose-6-phosphate to fructose-6-phosphate. The protein is Glucose-6-phosphate isomerase of Staphylococcus epidermidis (strain ATCC 12228 / FDA PCI 1200).